A 187-amino-acid polypeptide reads, in one-letter code: Large ribosomal subunit protein uL22 (187 aa).

Positions 161 to 187 are disordered; it reads APTDDAPAKKKLSKKKLARQKEKMMRE. A compositionally biased stretch (basic residues) spans 169–178; the sequence is KKKLSKKKLA.

The protein belongs to the universal ribosomal protein uL22 family.

The sequence is that of Large ribosomal subunit protein uL22 (RpL17) from Bombyx mori (Silk moth).